Here is a 242-residue protein sequence, read N- to C-terminus: Protein MHF1 homolog (242 aa).

The segment at 208-242 is disordered; the sequence is LKAKEPQSERKRKKGSAKKEDKASSSNAVRITTDL. The segment covering 231-242 has biased composition (polar residues); the sequence is SSSNAVRITTDL.

Belongs to the TAF9 family. CENP-S/MHF1 subfamily.

The protein resides in the nucleus. Involved in the promotion of spontaneous somatic homologous recombination (HR) events, which is opposite to the function of FANCM in ordered HR. Only FANCM is essential for replicative repair in the absence of the endonuclease MUS81. Acts in the same pathway as FANCM to restrain class II meiotic crossing over (CO), and acts with FANCM during meiosis to repair interstrand cross-links (ICLs). This common pathway between MHF1 and FANCM is in parallel to the pathway that involves the RECQ4A helicase. The sequence is that of Protein MHF1 homolog from Arabidopsis thaliana (Mouse-ear cress).